Here is a 214-residue protein sequence, read N- to C-terminus: RING-H2 finger protein ATL67 (214 aa).

A helical membrane pass occupies residues 33–53; it reads LGFGYSIAIALGFLVLLSTVL. The RING-type; atypical zinc finger occupies 138–180; that stretch reads CSICLCEYKEAEMLRMMPECKHYFHLCCLDAWLKLNGSCPVCR.

This sequence belongs to the RING-type zinc finger family. ATL subfamily.

The protein localises to the membrane. It catalyses the reaction S-ubiquitinyl-[E2 ubiquitin-conjugating enzyme]-L-cysteine + [acceptor protein]-L-lysine = [E2 ubiquitin-conjugating enzyme]-L-cysteine + N(6)-ubiquitinyl-[acceptor protein]-L-lysine.. It functions in the pathway protein modification; protein ubiquitination. This is RING-H2 finger protein ATL67 (ATL67) from Arabidopsis thaliana (Mouse-ear cress).